The primary structure comprises 354 residues: Uroporphyrinogen decarboxylase (354 aa).

Substrate is bound by residues 27–31, aspartate 77, tyrosine 154, serine 209, and histidine 327; that span reads RQAGR.

The protein belongs to the uroporphyrinogen decarboxylase family. In terms of assembly, homodimer.

The protein localises to the cytoplasm. It carries out the reaction uroporphyrinogen III + 4 H(+) = coproporphyrinogen III + 4 CO2. The protein operates within porphyrin-containing compound metabolism; protoporphyrin-IX biosynthesis; coproporphyrinogen-III from 5-aminolevulinate: step 4/4. In terms of biological role, catalyzes the decarboxylation of four acetate groups of uroporphyrinogen-III to yield coproporphyrinogen-III. The sequence is that of Uroporphyrinogen decarboxylase from Pseudomonas syringae pv. syringae (strain B728a).